Here is a 250-residue protein sequence, read N- to C-terminus: MELLLFVMSLILLTFSKAIPLFNHNSFYFEKLDDCIAAVINCTKSEVPLLLEPIYQPPAYNEDVMSILLQPPTKKKPFSRIMVTDEFLSDFLLLQDNPEQLRTLFALIRDPESRDNWLNFFNGFQTCSPSVGITTCIRDNCRKYSPEKITYVNNFFVDNIAGLEFNISENTDSFYSNIGFLLYLENPAKGVTKIIRFPFNSLTLFDTILNCLKYFHLKTGVELDLLKHMETYNSKLPFRSSRPTILIRNT.

The N-terminal stretch at 1–18 is a signal peptide; the sequence is MELLLFVMSLILLTFSKA. The gL betaherpesvirus-type domain maps to 31–239; that stretch reads KLDDCIAAVI…ETYNSKLPFR (209 aa). C136 and C141 form a disulfide bridge.

This sequence belongs to the herpesviridae glycoprotein L (gL) family. Betaherpesvirinae gL subfamily. As to quaternary structure, interacts with glycoprotein H (gH); this interaction is necessary for the correct processing and cell surface expression of gH. Part of a gH-gL-gO complex.

It localises to the virion membrane. The protein resides in the host cell membrane. It is found in the host Golgi apparatus. Its subcellular location is the host trans-Golgi network. The heterodimer glycoprotein H-glycoprotein L is required for the fusion of viral and plasma membranes leading to virus entry into the host cell. Acts as a functional inhibitor of gH and maintains gH in an inhibited form. Upon binding to host integrins, gL dissociates from gH leading to activation of the viral fusion glycoproteins gB and gH. This Human herpesvirus 6A (strain Uganda-1102) (HHV-6 variant A) protein is Envelope glycoprotein L.